A 224-amino-acid polypeptide reads, in one-letter code: UPF0758 protein VIBHAR_00653 (224 aa).

The MPN domain occupies 102–224 (ALTSPEQTKL…SVSFAERGWI (123 aa)). Zn(2+) contacts are provided by histidine 173, histidine 175, and aspartate 186. Positions 173–186 (HNHPSGVAEPSQAD) match the JAMM motif motif.

It belongs to the UPF0758 family.

The protein is UPF0758 protein VIBHAR_00653 of Vibrio campbellii (strain ATCC BAA-1116).